A 579-amino-acid polypeptide reads, in one-letter code: L-ascorbate oxidase (579 aa).

Residues 1 to 30 (MLQMGKAREPNFLILFFFGLILAFGISSEG) form the signal peptide. Plastocyanin-like domains are found at residues 33–152 (IRHY…LIVD) and 164–330 (DGEI…NYLP). 3 disulfide bridges follow: C49–C231, C111–C568, and C210–C223. 2 residues coordinate Cu cation: H90 and H92. N122 carries N-linked (GlcNAc...) asparagine glycosylation. Residues H134 and H136 each contribute to the Cu cation site. N-linked (GlcNAc...) asparagine glycans are attached at residues N355 and N470. The Plastocyanin-like 3 domain occupies 374-553 (NRRIFLLNTQ…HMGMGVVFAE (180 aa)). Cu cation contacts are provided by H475, H478, H480, H536, C537, H538, H542, and M547.

It belongs to the multicopper oxidase family. Dimer. The cofactor is Cu cation.

It localises to the secreted. The catalysed reaction is 4 L-ascorbate + O2 = 4 monodehydro-L-ascorbate radical + 2 H2O. May be involved in a redox system involving ascorbic acid. This chain is L-ascorbate oxidase (AAO), found in Cucurbita maxima (Pumpkin).